The chain runs to 174 residues: Ribosome rescue factor SmrB (174 aa).

The Smr domain occupies 96-171 (LDLHGLTQQQ…GDAAILVLIE (76 aa)).

Belongs to the SmrB family. Associates with collided ribosomes, but not with correctly translating polysomes.

In terms of biological role, acts as a ribosome collision sensor. Detects stalled/collided disomes (pairs of ribosomes where the leading ribosome is stalled and a second ribosome has collided with it) and endonucleolytically cleaves mRNA at the 5' boundary of the stalled ribosome. Stalled/collided disomes form a new interface (primarily via the 30S subunits) that binds SmrB. Cleaved mRNA becomes available for tmRNA ligation, leading to ribosomal subunit dissociation and rescue of stalled ribosomes. The chain is Ribosome rescue factor SmrB from Tolumonas auensis (strain DSM 9187 / NBRC 110442 / TA 4).